The following is a 364-amino-acid chain: Uroporphyrinogen decarboxylase (364 aa).

Substrate-binding positions include 28-32 (RQAGR), Asp-78, Tyr-160, Thr-215, and His-333.

Belongs to the uroporphyrinogen decarboxylase family. Homodimer.

It localises to the cytoplasm. The enzyme catalyses uroporphyrinogen III + 4 H(+) = coproporphyrinogen III + 4 CO2. Its pathway is porphyrin-containing compound metabolism; protoporphyrin-IX biosynthesis; coproporphyrinogen-III from 5-aminolevulinate: step 4/4. In terms of biological role, catalyzes the decarboxylation of four acetate groups of uroporphyrinogen-III to yield coproporphyrinogen-III. This Burkholderia pseudomallei (strain 1106a) protein is Uroporphyrinogen decarboxylase.